Consider the following 641-residue polypeptide: MTDSTIPGLLARIQRPTDVAGLSADDLRTLAADLRTAIIDTVSKNGGHLAPSLGVVELTLAMLSTFDPGKDKVVWDVGHQAYAWKLLTGRAADFHTLRRRHGISGFPKPCESEYDHFGVGHSSTSISAALGMALARDLAGDDHHVVAVIGDGSLTAGLAFEGLNQAGDMGRRLIVILNDNEMSISRNVGALSLFLSRNLSKGWARRVKRDVETALKSIPGIGDEMVAYAKRSEHSLKSFFTPGMLFEAFQFNYIGPVDGHDVKALVRNLELAKTNDRPVLLHVLTRKGKGYTPAEANPAFFHGVGRFEPETGRARKPGDTPVLPTYTDVFGETLCRLADMDERIVAITAAMPEGTGTNCFRERHPDRFVDVGICEQHAVTFAAGLAIQGYRPFVAIYSTFLQRSYDQIVHDVCIQKLPVVLCLDRAGLVGEDGPTHHGAFDLSFLRHIPHMSIIAPRDEADLQAAMYTALHLDAPLAIRYPRGVGFGIPLAESPSPLPVGVGEVLKEGEGVAVIAVGSRVHPSLEAAERLAEETGRHATVFDARWVKPLPEAQLLDIVARHDALLFVEENALAGGFSSAVLELLADRNALSGKHIRRIGLPDEFVEQGTQKELRVSLGLCMDGVGKALKELFAAVGNATAS.

Thiamine diphosphate-binding positions include His-79 and Gly-120–Ser-122. Asp-151 is a binding site for Mg(2+). Residues Gly-152–Ser-153, Asn-180, Tyr-291, and Glu-375 each bind thiamine diphosphate. Asn-180 provides a ligand contact to Mg(2+).

Belongs to the transketolase family. DXPS subfamily. As to quaternary structure, homodimer. Requires Mg(2+) as cofactor. Thiamine diphosphate serves as cofactor.

It carries out the reaction D-glyceraldehyde 3-phosphate + pyruvate + H(+) = 1-deoxy-D-xylulose 5-phosphate + CO2. Its pathway is metabolic intermediate biosynthesis; 1-deoxy-D-xylulose 5-phosphate biosynthesis; 1-deoxy-D-xylulose 5-phosphate from D-glyceraldehyde 3-phosphate and pyruvate: step 1/1. Catalyzes the acyloin condensation reaction between C atoms 2 and 3 of pyruvate and glyceraldehyde 3-phosphate to yield 1-deoxy-D-xylulose-5-phosphate (DXP). The chain is 1-deoxy-D-xylulose-5-phosphate synthase from Nitratidesulfovibrio vulgaris (strain ATCC 29579 / DSM 644 / CCUG 34227 / NCIMB 8303 / VKM B-1760 / Hildenborough) (Desulfovibrio vulgaris).